The chain runs to 964 residues: SKI family transcriptional corepressor 1 (964 aa).

6 disordered regions span residues 45–72, 278–365, 414–461, 525–587, 610–768, and 794–842; these read TQLG…SSAL, RTFS…GGSA, AGEP…WGHQ, AGGG…RKSS, REAY…GAAK, and LCTP…EDGL. A compositionally biased stretch (gly residues) spans 283-310; sequence QGGGGGGANSGSGGAGKGGAGGGGGPGC. Low complexity predominate over residues 345–355; that stretch reads ALGLAAAASGP. Composition is skewed to gly residues over residues 356–365 and 417–440; these read AGPGGPGGSA and PKGG…GPGA. Residues 571 to 583 show a composition bias toward pro residues; it reads SLGPLPPPPPPPA. A compositionally biased stretch (acidic residues) spans 652–661; that stretch reads DTADEPEVDV. Basic and acidic residues predominate over residues 798–808; that stretch reads ETHEPDKEDNH. Positions 823–834 are enriched in polar residues; that stretch reads DQRSVSQPSPAN. Residues 853-921 are a coiled coil; it reads EKDIENLARE…DTLCNELDQE (69 aa).

The protein belongs to the SKI family. As to quaternary structure, interacts with SMAD1, SMAD2 and SMAD3. Interacts with LBX1. In terms of tissue distribution, expressed in brain with higher levels in embryo than adult. Expressed by migratory precursors of Purkinje cells in the postnatal brain. Also expressed in adult testis.

The protein localises to the nucleus. Inhibits BMP signaling. Acts as a transcriptional corepressor of LBX1. The polypeptide is SKI family transcriptional corepressor 1 (Skor1) (Mus musculus (Mouse)).